We begin with the raw amino-acid sequence, 157 residues long: Large ribosomal subunit protein uL11 (157 aa).

Belongs to the universal ribosomal protein uL11 family.

Functionally, this protein binds directly to 26S ribosomal RNA. This is Large ribosomal subunit protein uL11 (RPL12) from Chlamydomonas reinhardtii (Chlamydomonas smithii).